A 431-amino-acid chain; its full sequence is MFHSPRRLCSALLQRDAPGLRRLPAPGLRRPLSPPAAVPRPASPRLLAAASAASGAARSCSRTVCSMGTGTSRLYSALAKTLNSSAASQHPEYLVSPDPEHLEPIDPKELLEECRAVLHTRPPRFQRDFVDLRTDCPSTHPPIRVMQWNILAQALGEGKDNFVQCPVEALKWEERKCLILEEILAYQPDILCLQEVDHYFDTFQPLLSRLGYQGTFFPKPWSPCLDVEHNNGPDGCALFFLQNRFKLVNSANIRLTAMTLKTNQVAIAQTLECKESGRQFCIAVTHLKARTGWERFRSAQGCDLLQNLQNITQGAKIPLIVCGDFNAEPTEEVYKHFASSSLNLNSAYKLLSADGQSEPPYTTWKIRTSGECRHTLDYIWYSKHALNVRSALDLLTEEQIGPNRLPSFNYPSDHLSLVCDFSFTEESDGLS.

The N-terminal 75 residues, 1–75 (MFHSPRRLCS…SMGTGTSRLY (75 aa)), are a transit peptide targeting the mitochondrion. Over residues 20-31 (LRRLPAPGLRRP) the composition is skewed to low complexity. The disordered stretch occupies residues 20–41 (LRRLPAPGLRRPLSPPAAVPRP). Over residues 32–41 (LSPPAAVPRP) the composition is skewed to pro residues. E195 lines the Mg(2+) pocket. Residues E195, 219–221 (KPW), N263, 286–289 (HLKA), and 324–326 (DFN) each bind substrate. The interval 343-353 (NLNSAYKLLSA) is interaction with PPARG. Residue H414 participates in substrate binding.

This sequence belongs to the CCR4/nocturin family. In terms of assembly, interacts with PPARG. Mg(2+) is required as a cofactor. As to expression, adipose tissue. Expression is higher in subcutaneous adipose tissue as compared to visceral adipose tissue.

Its subcellular location is the cytoplasm. It localises to the nucleus. The protein localises to the perinuclear region. The protein resides in the mitochondrion. It catalyses the reaction NADP(+) + H2O = phosphate + NAD(+). The enzyme catalyses NADPH + H2O = phosphate + NADH. In terms of biological role, phosphatase which catalyzes the conversion of NADP(+) to NAD(+) and of NADPH to NADH. Shows a small preference for NADPH over NADP(+). Represses translation and promotes degradation of target mRNA molecules. Plays an important role in post-transcriptional regulation of metabolic genes under circadian control. Exerts a rhythmic post-transcriptional control of genes necessary for metabolic functions including nutrient absorption, glucose/insulin sensitivity, lipid metabolism, adipogenesis, inflammation and osteogenesis. Plays an important role in favoring adipogenesis over osteoblastogenesis and acts as a key regulator of the adipogenesis/osteogenesis balance. Promotes adipogenesis by facilitating PPARG nuclear translocation which activates its transcriptional activity. Regulates circadian expression of NOS2 in the liver and negatively regulates the circadian expression of IGF1 in the bone. Critical for proper development of early embryos. The chain is Nocturnin from Homo sapiens (Human).